Consider the following 234-residue polypeptide: Sperm-associated microtubule inner protein 5 (234 aa).

In terms of assembly, microtubule inner protein component of sperm flagellar doublet microtubules. As to expression, expressed in testis (at protein level). Strongly expressed in peritubular cells and Leydig cells and weakly expressed in the cytoplasm of spermatocytes.

It is found in the cytoplasm. Its subcellular location is the cytoskeleton. It localises to the flagellum axoneme. The protein resides in the nucleus. Microtubule inner protein (MIP) part of the dynein-decorated doublet microtubules (DMTs) in flagellum axoneme. May serve to reinforce and thus stabilize the microtubule structure in the sperm flagella. The sequence is that of Sperm-associated microtubule inner protein 5 from Homo sapiens (Human).